An 84-amino-acid polypeptide reads, in one-letter code: Toxin Acra3 (84 aa).

An N-terminal signal peptide occupies residues 1–17; it reads MKIIFLVLMMILSEVYS. An LCN-type CS-alpha/beta domain is found at 19 to 82; that stretch reads RDGYPVHDGT…VYGDDGIFCK (64 aa). Disulfide bonds link Cys30/Cys81, Cys34/Cys57, Cys43/Cys62, and Cys47/Cys64. A Serine amide modification is found at Ser83.

It belongs to the long (4 C-C) scorpion toxin superfamily. Sodium channel inhibitor family. Beta subfamily. In terms of tissue distribution, expressed by the venom gland.

Its subcellular location is the secreted. Toxin with unknown target. In vivo, induces severe neurotoxic events in mice such as excitability and convulsions, leading to the death of the animals within a few minutes after injection. Exerts very strong cytotoxic effect on a mouse brain tumor cell line (BC3H1) (IC(50)=5 mg/ml). It exerts its effects by inducing a stronger necrosis than apoptosis in BC3H1 cells. This chain is Toxin Acra3, found in Androctonus crassicauda (Arabian fat-tailed scorpion).